A 167-amino-acid polypeptide reads, in one-letter code: Zymogen granule membrane protein 16 (167 aa).

The signal sequence occupies residues 1-16 (MLAIALLVLLCASASA). The 136-residue stretch at 24-159 (SSYSGEYGGK…IDAISLHWDT (136 aa)) folds into the Jacalin-type lectin domain.

Belongs to the jacalin lectin family. As to expression, expressed in pancreas, colon, duodenum, and much less in stomach.

The protein localises to the secreted. It is found in the extracellular space. It localises to the extracellular matrix. Its subcellular location is the zymogen granule lumen. The protein resides in the golgi apparatus lumen. Functionally, may play a role in protein trafficking. May act as a linker molecule between the submembranous matrix on the luminal side of zymogen granule membrane (ZGM) and aggregated secretory proteins during granule formation in the TGN. This chain is Zymogen granule membrane protein 16 (Zg16), found in Rattus norvegicus (Rat).